Here is a 112-residue protein sequence, read N- to C-terminus: Na(+)/H(+) antiporter subunit C (112 aa).

Transmembrane regions (helical) follow at residues 4–21 (LMSI…YLIL), 28–50 (VVVG…AGLQ), and 70–92 (QALI…VLAY).

Belongs to the CPA3 antiporters (TC 2.A.63) subunit C family. In terms of assembly, forms a heterooligomeric complex that consists of seven subunits: MrpA, MrpB, MrpC, MrpD, MrpE, MrpF and MrpG.

Its subcellular location is the cell membrane. In terms of biological role, mnh complex is a Na(+)Li(+)/H(+) antiporter involved in Na(+) and/or Li(+) excretion and Na(+) resistance. Na(+)/H(+) antiport consumes a transmembrane electrical potential, and is thus inferred to be electrogenic. Does not transport K(+), Ca(2+) or Mg(2+). The chain is Na(+)/H(+) antiporter subunit C (mrpC) from Alkalihalophilus pseudofirmus (strain ATCC BAA-2126 / JCM 17055 / OF4) (Bacillus pseudofirmus).